The primary structure comprises 87 residues: UPF0367 protein Syncc9902_0316 (87 aa).

The protein belongs to the UPF0367 family.

The polypeptide is UPF0367 protein Syncc9902_0316 (Synechococcus sp. (strain CC9902)).